Reading from the N-terminus, the 736-residue chain is Ethylene receptor 2 (736 aa).

The next 3 membrane-spanning stretches (helical) occupy residues 22–42 (ISDFFIAVAYFSIPIELVYFV), 53–73 (VLVQFGAFIVLCGATHLINLW), and 94–114 (AAVSCATAVMLVHIIPDLLSV). Residues Cys64 and His68 each coordinate Cu cation. The GAF domain maps to 157–305 (DRHTILKTTL…VVADQVAVAL (149 aa)). The Histidine kinase domain occupies 348–585 (VMNHEMRTPM…TAIFIVKLGI (238 aa)). His351 is modified (phosphohistidine; by autocatalysis). The region spanning 613–730 (KVLVMDDNGF…KMRSVLSGLL (118 aa)) is the Response regulatory domain. Residue Asp661 is modified to 4-aspartylphosphate.

Belongs to the ethylene receptor family. In terms of assembly, homodimer; disulfide-linked. Requires Cu cation as cofactor. In terms of processing, activation probably requires a transfer of a phosphate group between a His in the transmitter domain and an Asp of the receiver domain. As to expression, leaves, flowers and fruits.

It is found in the endoplasmic reticulum membrane. It carries out the reaction ATP + protein L-histidine = ADP + protein N-phospho-L-histidine.. Its function is as follows. May act early in the ethylene signal transduction pathway, possibly as an ethylene receptor, or as a regulator of the pathway. This Solanum lycopersicum (Tomato) protein is Ethylene receptor 2 (ETR2).